Here is a 398-residue protein sequence, read N- to C-terminus: Phosphoglycerate kinase (398 aa).

Substrate-binding positions include 21–23, Arg-36, 59–62, Arg-119, and Arg-157; these read DFN and HLGR. Residues Lys-208, Gly-296, Glu-327, and 354-357 each bind ATP; that span reads GGDS.

The protein belongs to the phosphoglycerate kinase family. In terms of assembly, monomer.

The protein resides in the cytoplasm. The catalysed reaction is (2R)-3-phosphoglycerate + ATP = (2R)-3-phospho-glyceroyl phosphate + ADP. It participates in carbohydrate degradation; glycolysis; pyruvate from D-glyceraldehyde 3-phosphate: step 2/5. This chain is Phosphoglycerate kinase, found in Streptococcus mutans serotype c (strain ATCC 700610 / UA159).